Reading from the N-terminus, the 224-residue chain is DNA mismatch repair protein MutH (224 aa).

It belongs to the MutH family.

It is found in the cytoplasm. Functionally, sequence-specific endonuclease that cleaves unmethylated GATC sequences. It is involved in DNA mismatch repair. The chain is DNA mismatch repair protein MutH from Histophilus somni (strain 2336) (Haemophilus somnus).